The chain runs to 216 residues: LexA repressor (216 aa).

The H-T-H motif DNA-binding region spans 28-48; sequence RAEIAAELGFSSANSAEEHLR. Residues Ser-134 and Lys-171 each act as for autocatalytic cleavage activity in the active site.

It belongs to the peptidase S24 family. Homodimer.

It carries out the reaction Hydrolysis of Ala-|-Gly bond in repressor LexA.. Its function is as follows. Represses a number of genes involved in the response to DNA damage (SOS response), including recA and lexA. In the presence of single-stranded DNA, RecA interacts with LexA causing an autocatalytic cleavage which disrupts the DNA-binding part of LexA, leading to derepression of the SOS regulon and eventually DNA repair. The sequence is that of LexA repressor from Paraburkholderia xenovorans (strain LB400).